The chain runs to 246 residues: Transcriptional regulatory protein LytR (246 aa).

Residues 2–116 enclose the Response regulatory domain; it reads KALIIDDEPL…RIEQAVNKVR (115 aa). Aspartate 53 bears the 4-aspartylphosphate mark. One can recognise an HTH LytTR-type domain in the interval 141–245; it reads LPVEIDDKIH…MKDFKASIGL (105 aa).

Homodimer; when phosphorylated. In terms of processing, phosphorylated and dephosphorylated by LytS.

It localises to the cytoplasm. Member of the two-component regulatory system LytR/LytS that regulates genes involved in autolysis, programmed cell death, biofilm formation and cell wall metabolism. Also participates in sensing and responding to host defense cationic antimicrobial peptides (HDPs). Upon phosphorylation by LytS, functions as a transcription regulator by direct binding to promoter regions of target genes including lrgA and lrgB, to positively regulate their expression. This chain is Transcriptional regulatory protein LytR (lytR), found in Staphylococcus aureus (strain bovine RF122 / ET3-1).